The primary structure comprises 49 residues: Chitin-binding lectin (49 aa).

Residues Asp2–Cys45 enclose the Chitin-binding type-1 domain. Cystine bridges form between Cys5-Cys22, Cys16-Cys28, Cys21-Cys35, and Cys39-Cys43.

In terms of assembly, homodimer; disulfide-linked.

Functionally, chitin-binding lectin which is specific for N-acetylglucosamine oligomers. This chain is Chitin-binding lectin, found in Viscum album (European mistletoe).